The sequence spans 379 residues: MSSAKTRLFLTIEKLKNSMDDPQMTYPFWEKFFPLLGNSTTITLELSTLSEMINEAAETAEQLIVTQGGVVYSQYVQNATNTSGTNNNMVNRRLLVPPISTATPVLQPLEIKKYHNFAEKIASYFVSASVQSSMYTVKDVVKLYLYLSHLPKFKPLFSLLEEALFTKQRNCVPAVTSDKLILILDNLRDLTVITNFRLDNEAVSLMLNNIQIVLNNELSKYPVVKVKDFISTSNVYEKEVEPFKAFGDKFELLVAQKSSHLVLSSENTLLFNSNPIIVENIAASIEYNCDINRMVYNSINNIFINSVEQSAAENIKFDVDDYNRRYRVLDRIRENLRNNYIEKVAVGDISSKKRITNNPTTIPPITLKKRRTSNLLIED.

This is an uncharacterized protein from Tortricidae (ClGV).